Consider the following 264-residue polypeptide: Phosphonoacetaldehyde hydrolase (264 aa).

The active-site Nucleophile is Asp-9. Positions 9 and 11 each coordinate Mg(2+). The active-site Schiff-base intermediate with substrate is the Lys-50. A Mg(2+)-binding site is contributed by Asp-183.

This sequence belongs to the HAD-like hydrolase superfamily. PhnX family. Homodimer. The cofactor is Mg(2+).

It catalyses the reaction phosphonoacetaldehyde + H2O = acetaldehyde + phosphate + H(+). Functionally, involved in phosphonate degradation. The polypeptide is Phosphonoacetaldehyde hydrolase (Bacillus thuringiensis (strain Al Hakam)).